The sequence spans 641 residues: Pre-mRNA-processing factor 39 (641 aa).

The segment at 1 to 50 (MEKSPEHCAEGSPSPATESAPSATEPPLPSTEPPLPSTEPPLPSTEPPLP) is disordered. The span at 10 to 23 (EGSPSPATESAPSA) shows a compositional bias: low complexity. Positions 24-50 (TEPPLPSTEPPLPSTEPPLPSTEPPLP) are enriched in pro residues. HAT repeat units follow at residues 50–82 (PPLPPDFEKYWKSVQAYPEDFNTWTYLLQYVEQ), 84–116 (NHLFAARKAFDAFLAHYPYCYGYWKKYADLEKK), 118–150 (NNILEADEVYRRGIQAITLSVDLWMHYLNFLKE), 158–193 (ETSLTLRGTFEHAVVSAGLDFRSDKLWEMYINWETE), 304–336 (NFEEEIKRPYFHVKPLEKAQLNNWKEYLEFELE), 338–370 (GSNERIVILFERCVIACACYEEFWIKYAKYMEN), and 372–407 (SVEGVRHVYNRACHVHLAKKPMVHLLWAAFEEQQGN).

This sequence belongs to the PRP39 family.

It localises to the nucleus. Involved in pre-mRNA splicing. The protein is Pre-mRNA-processing factor 39 (prpf39) of Xenopus laevis (African clawed frog).